A 694-amino-acid polypeptide reads, in one-letter code: Methionine--tRNA ligase (694 aa).

A 'HIGH' region motif is present at residues 14–24 (PYANGPIHLGH). Zn(2+)-binding residues include Cys145, Cys148, Cys158, and Cys161. The 'KMSKS' region signature appears at 330 to 334 (KMSKS). Lys333 is an ATP binding site. The disordered stretch occupies residues 558–579 (SLQATAGQPEPHSQVRHAEHQQ). Positions 593-694 (DFAKVDLRIA…EGAQPGMKVK (102 aa)) constitute a tRNA-binding domain.

The protein belongs to the class-I aminoacyl-tRNA synthetase family. MetG type 1 subfamily. In terms of assembly, homodimer. The cofactor is Zn(2+).

It is found in the cytoplasm. It carries out the reaction tRNA(Met) + L-methionine + ATP = L-methionyl-tRNA(Met) + AMP + diphosphate. In terms of biological role, is required not only for elongation of protein synthesis but also for the initiation of all mRNA translation through initiator tRNA(fMet) aminoacylation. The polypeptide is Methionine--tRNA ligase (Methylococcus capsulatus (strain ATCC 33009 / NCIMB 11132 / Bath)).